A 452-amino-acid chain; its full sequence is Adenosylmethionine-8-amino-7-oxononanoate aminotransferase (452 aa).

116–117 (GS) serves as a coordination point for pyridoxal 5'-phosphate. Position 152 (Tyr152) interacts with substrate. A pyridoxal 5'-phosphate-binding site is contributed by Asp257. Substrate is bound by residues Lys286, Gly321, and Arg414. At Lys286 the chain carries N6-(pyridoxal phosphate)lysine.

The protein belongs to the class-III pyridoxal-phosphate-dependent aminotransferase family. BioA subfamily. As to quaternary structure, homodimer. Requires pyridoxal 5'-phosphate as cofactor.

It localises to the cytoplasm. The catalysed reaction is (8S)-8-amino-7-oxononanoate + S-adenosyl-L-methionine = S-adenosyl-4-methylsulfanyl-2-oxobutanoate + (7R,8S)-7,8-diammoniononanoate. The protein operates within cofactor biosynthesis; biotin biosynthesis; 7,8-diaminononanoate from 8-amino-7-oxononanoate (SAM route): step 1/1. Functionally, catalyzes the transfer of the alpha-amino group from S-adenosyl-L-methionine (SAM) to 7-keto-8-aminopelargonic acid (KAPA) to form 7,8-diaminopelargonic acid (DAPA). It is the only aminotransferase known to utilize SAM as an amino donor. The polypeptide is Adenosylmethionine-8-amino-7-oxononanoate aminotransferase (Staphylococcus aureus (strain NCTC 8325 / PS 47)).